The sequence spans 160 residues: Deoxyuridine 5'-triphosphate nucleotidohydrolase (160 aa).

Residues 76–78 (RSG), asparagine 89, and 93–95 (TID) each bind substrate. Over residues 139-149 (HTLSDTERGED) the composition is skewed to basic and acidic residues. The disordered stretch occupies residues 139–160 (HTLSDTERGEDGFGSTGHGSHQ). The span at 150-160 (GFGSTGHGSHQ) shows a compositional bias: gly residues.

Belongs to the dUTPase family. Mg(2+) serves as cofactor.

It carries out the reaction dUTP + H2O = dUMP + diphosphate + H(+). It participates in pyrimidine metabolism; dUMP biosynthesis; dUMP from dCTP (dUTP route): step 2/2. In terms of biological role, this enzyme is involved in nucleotide metabolism: it produces dUMP, the immediate precursor of thymidine nucleotides and it decreases the intracellular concentration of dUTP so that uracil cannot be incorporated into DNA. The polypeptide is Deoxyuridine 5'-triphosphate nucleotidohydrolase (Beijerinckia indica subsp. indica (strain ATCC 9039 / DSM 1715 / NCIMB 8712)).